Reading from the N-terminus, the 326-residue chain is MLIDWFTVVAQALNFLILVWLLKRFLYQPILDAIDAREKRIALELADADTKRADAKRERDEFQQKNEVFDQQRAALLGKAMEEAKTERQRLLDDARHAADALATKRQEALRSAQRSMSEALSHRARDEVFAIARKALGDLATTSLEERMGEVFTRRLREMDAKAKAALGEALKTASEPALVRSAFELPADQRAAIQNAINETFSADIPLHFATAPEVVCGIELSTNGQKVGWSITDYLASLEKGVDELLKERDKAEPQSELTRQIRKRAYELYEQQGRKEGRAVQNWDKAESEIRKENLSPAKTEPPPEAKAKPKPEEPKPEIGSP.

A helical membrane pass occupies residues 2–22 (LIDWFTVVAQALNFLILVWLL). 2 stretches are compositionally biased toward basic and acidic residues: residues 275–298 (QQGR…RKEN) and 306–326 (PPPE…IGSP). The segment at 275–326 (QQGRKEGRAVQNWDKAESEIRKENLSPAKTEPPPEAKAKPKPEEPKPEIGSP) is disordered.

This sequence belongs to the ATPase B chain family. As to quaternary structure, F-type ATPases have 2 components, F(1) - the catalytic core - and F(0) - the membrane proton channel. F(1) has five subunits: alpha(3), beta(3), gamma(1), delta(1), epsilon(1). F(0) has three main subunits: a(1), b(2) and c(10-14). The alpha and beta chains form an alternating ring which encloses part of the gamma chain. F(1) is attached to F(0) by a central stalk formed by the gamma and epsilon chains, while a peripheral stalk is formed by the delta and b chains.

Its subcellular location is the cell inner membrane. Its function is as follows. F(1)F(0) ATP synthase produces ATP from ADP in the presence of a proton or sodium gradient. F-type ATPases consist of two structural domains, F(1) containing the extramembraneous catalytic core and F(0) containing the membrane proton channel, linked together by a central stalk and a peripheral stalk. During catalysis, ATP synthesis in the catalytic domain of F(1) is coupled via a rotary mechanism of the central stalk subunits to proton translocation. Functionally, component of the F(0) channel, it forms part of the peripheral stalk, linking F(1) to F(0). This chain is ATP synthase subunit b 2, found in Albidiferax ferrireducens (strain ATCC BAA-621 / DSM 15236 / T118) (Rhodoferax ferrireducens).